Here is a 256-residue protein sequence, read N- to C-terminus: Biosynthetic peptidoglycan transglycosylase (256 aa).

A helical transmembrane segment spans residues 26 to 48 (VARWLAYVGGVFAGAWLATQLYY).

The protein belongs to the glycosyltransferase 51 family.

It localises to the cell inner membrane. It catalyses the reaction [GlcNAc-(1-&gt;4)-Mur2Ac(oyl-L-Ala-gamma-D-Glu-L-Lys-D-Ala-D-Ala)](n)-di-trans,octa-cis-undecaprenyl diphosphate + beta-D-GlcNAc-(1-&gt;4)-Mur2Ac(oyl-L-Ala-gamma-D-Glu-L-Lys-D-Ala-D-Ala)-di-trans,octa-cis-undecaprenyl diphosphate = [GlcNAc-(1-&gt;4)-Mur2Ac(oyl-L-Ala-gamma-D-Glu-L-Lys-D-Ala-D-Ala)](n+1)-di-trans,octa-cis-undecaprenyl diphosphate + di-trans,octa-cis-undecaprenyl diphosphate + H(+). Its pathway is cell wall biogenesis; peptidoglycan biosynthesis. In terms of biological role, peptidoglycan polymerase that catalyzes glycan chain elongation from lipid-linked precursors. This is Biosynthetic peptidoglycan transglycosylase from Burkholderia pseudomallei (strain K96243).